The sequence spans 524 residues: Gamma-taxilin (524 aa).

Positions 1-10 (MATRLEEVTR) are enriched in basic and acidic residues. 2 disordered regions span residues 1–37 (MATRLEEVTRGRGGGTEEASEGGRGGRRRSPPQKFEI) and 64–86 (LQHQDPSCGGTTKKHSLEGDEGS). Omega-N-methylarginine is present on residues arginine 12 and arginine 24. Phosphoserine is present on residues serine 79, serine 86, and serine 97. A compositionally biased stretch (basic and acidic residues) spans 106–115 (REEIPGREAR). The disordered stretch occupies residues 106–130 (REEIPGREARTGPPDGQQDSECSRN). Positions 153-465 (EEKLAALCKK…KEQVSIKAAD (313 aa)) form a coiled coil. Tyrosine 283 is modified (phosphotyrosine). Residues 501 to 524 (VCEKSAAQKPSSSGSPAQGIESVD) form a disordered region. Serine 512 is modified (phosphoserine).

It belongs to the taxilin family. As to quaternary structure, binds to the C-terminal coiled coil region of syntaxin family members STX1A, STX3A and STX4A. Forms a heterodimer with ATF4 in osteoblasts.

The protein resides in the nucleus membrane. Its subcellular location is the cytoplasm. It localises to the cytosol. Its function is as follows. May be involved in intracellular vesicle traffic. Inhibits ATF4-mediated transcription, possibly by dimerizing with ATF4 to form inactive dimers that cannot bind DNA. May be involved in regulating bone mass density through an ATF4-dependent pathway. May be involved in cell cycle progression. The protein is Gamma-taxilin (Txlng) of Mus musculus (Mouse).